Consider the following 130-residue polypeptide: Ribonuclease P protein component 2 (130 aa).

This sequence belongs to the eukaryotic/archaeal RNase P protein component 2 family. In terms of assembly, consists of a catalytic RNA component and at least 4-5 protein subunits.

Its subcellular location is the cytoplasm. The catalysed reaction is Endonucleolytic cleavage of RNA, removing 5'-extranucleotides from tRNA precursor.. Its function is as follows. Part of ribonuclease P, a protein complex that generates mature tRNA molecules by cleaving their 5'-ends. The sequence is that of Ribonuclease P protein component 2 from Methanococcus maripaludis (strain C5 / ATCC BAA-1333).